A 265-amino-acid chain; its full sequence is 4-hydroxy-tetrahydrodipicolinate reductase (265 aa).

NAD(+) is bound by residues 7–12 (GASGRM) and aspartate 33. Arginine 34 serves as a coordination point for NADP(+). Residues 96 to 98 (GTT) and 120 to 123 (ASNF) each bind NAD(+). The Proton donor/acceptor role is filled by histidine 153. Residue histidine 154 participates in (S)-2,3,4,5-tetrahydrodipicolinate binding. The Proton donor role is filled by lysine 157. 163–164 (GT) is a (S)-2,3,4,5-tetrahydrodipicolinate binding site.

Belongs to the DapB family.

It is found in the cytoplasm. It catalyses the reaction (S)-2,3,4,5-tetrahydrodipicolinate + NAD(+) + H2O = (2S,4S)-4-hydroxy-2,3,4,5-tetrahydrodipicolinate + NADH + H(+). It carries out the reaction (S)-2,3,4,5-tetrahydrodipicolinate + NADP(+) + H2O = (2S,4S)-4-hydroxy-2,3,4,5-tetrahydrodipicolinate + NADPH + H(+). Its pathway is amino-acid biosynthesis; L-lysine biosynthesis via DAP pathway; (S)-tetrahydrodipicolinate from L-aspartate: step 4/4. Functionally, catalyzes the conversion of 4-hydroxy-tetrahydrodipicolinate (HTPA) to tetrahydrodipicolinate. The chain is 4-hydroxy-tetrahydrodipicolinate reductase from Paraburkholderia phymatum (strain DSM 17167 / CIP 108236 / LMG 21445 / STM815) (Burkholderia phymatum).